The following is a 448-amino-acid chain: Argininosuccinate synthase (448 aa).

Residues 17-25 (AFSGGLDTS) and Ala43 contribute to the ATP site. An L-citrulline-binding site is contributed by Tyr99. Residues Gly129 and Thr131 each coordinate ATP. Residues Thr131, Asn135, and Asp136 each contribute to the L-aspartate site. Asn135 serves as a coordination point for L-citrulline. Asp136 is an ATP binding site. 2 residues coordinate L-citrulline: Arg139 and Ser192. Asp194 lines the ATP pocket. Positions 201, 203, and 280 each coordinate L-citrulline.

This sequence belongs to the argininosuccinate synthase family. Type 2 subfamily. As to quaternary structure, homotetramer.

The protein localises to the cytoplasm. It catalyses the reaction L-citrulline + L-aspartate + ATP = 2-(N(omega)-L-arginino)succinate + AMP + diphosphate + H(+). Its pathway is amino-acid biosynthesis; L-arginine biosynthesis; L-arginine from L-ornithine and carbamoyl phosphate: step 2/3. This Pectobacterium atrosepticum (strain SCRI 1043 / ATCC BAA-672) (Erwinia carotovora subsp. atroseptica) protein is Argininosuccinate synthase.